We begin with the raw amino-acid sequence, 119 residues long: Hydrogenase maturation factor HypA (119 aa).

H2 is a binding site for Ni(2+). Zn(2+) is bound by residues C73, C76, C89, and C92.

The protein belongs to the HypA/HybF family.

Its function is as follows. Involved in the maturation of [NiFe] hydrogenases. Required for nickel insertion into the metal center of the hydrogenase. This Dehalococcoides mccartyi (strain ATCC BAA-2266 / KCTC 15142 / 195) (Dehalococcoides ethenogenes (strain 195)) protein is Hydrogenase maturation factor HypA.